The chain runs to 331 residues: Glycerol-3-phosphate dehydrogenase [NAD(P)+] (331 aa).

Positions 11, 12, 32, and 106 each coordinate NADPH. Residues Lys106, Gly134, and Ser136 each contribute to the sn-glycerol 3-phosphate site. An NADPH-binding site is contributed by Ala138. Residues Lys189, Asp242, Ser252, Arg253, and Asn254 each coordinate sn-glycerol 3-phosphate. The Proton acceptor role is filled by Lys189. Arg253 serves as a coordination point for NADPH. Residues Val277 and Glu279 each contribute to the NADPH site.

Belongs to the NAD-dependent glycerol-3-phosphate dehydrogenase family.

It is found in the cytoplasm. The enzyme catalyses sn-glycerol 3-phosphate + NAD(+) = dihydroxyacetone phosphate + NADH + H(+). It catalyses the reaction sn-glycerol 3-phosphate + NADP(+) = dihydroxyacetone phosphate + NADPH + H(+). Its pathway is membrane lipid metabolism; glycerophospholipid metabolism. Catalyzes the reduction of the glycolytic intermediate dihydroxyacetone phosphate (DHAP) to sn-glycerol 3-phosphate (G3P), the key precursor for phospholipid synthesis. This chain is Glycerol-3-phosphate dehydrogenase [NAD(P)+], found in Clostridium perfringens (strain SM101 / Type A).